A 290-amino-acid polypeptide reads, in one-letter code: Porphobilinogen deaminase (290 aa).

Position 237 is an S-(dipyrrolylmethanemethyl)cysteine (Cys237).

The protein belongs to the HMBS family. Monomer. Requires dipyrromethane as cofactor.

The enzyme catalyses 4 porphobilinogen + H2O = hydroxymethylbilane + 4 NH4(+). It functions in the pathway porphyrin-containing compound metabolism; protoporphyrin-IX biosynthesis; coproporphyrinogen-III from 5-aminolevulinate: step 2/4. Its function is as follows. Tetrapolymerization of the monopyrrole PBG into the hydroxymethylbilane pre-uroporphyrinogen in several discrete steps. This chain is Porphobilinogen deaminase, found in Clostridium botulinum (strain ATCC 19397 / Type A).